Consider the following 1067-residue polypeptide: Dorsal-ventral patterning protein tolloid (1067 aa).

Residues 1–36 form the signal peptide; the sequence is MKGMRLMPMKMKAKLVVLSVGALWMMMFFLVDYAEG. Residues 37–136 constitute a propeptide that is removed on maturation; sequence RRLSQLPESE…NGQPIQRRRR (100 aa). The Peptidase M12A domain occupies 136–338; that stretch reads RAVTVRKERT…VQANLLYKCA (203 aa). N-linked (GlcNAc...) asparagine glycosylation occurs at Asn-176. 5 cysteine pairs are disulfide-bonded: Cys-179–Cys-337, Cys-201–Cys-223, Cys-203–Cys-204, Cys-340–Cys-390, and Cys-417–Cys-439. His-231 is a Zn(2+) binding site. Residue Glu-232 is part of the active site. His-235 and His-241 together coordinate Zn(2+). 2 consecutive short sequence motifs (cell attachment site) follow at residues 245–247 and 325–327; these read RGD. CUB domains follow at residues 340-477 and 478-591; these read CGRT…FEVV and CGGD…LMLD. Asn-441 carries N-linked (GlcNAc...) asparagine glycosylation. 6 disulfides stabilise this stretch: Cys-478-Cys-505, Cys-532-Cys-554, Cys-595-Cys-606, Cys-602-Cys-615, Cys-617-Cys-630, and Cys-634-Cys-662. Asn-543 is a glycosylation site (N-linked (GlcNAc...) asparagine). The region spanning 591-631 is the EGF-like 1; calcium-binding domain; the sequence is DVDECKFTDHGCQHLCINTLGSYQCGCRAGYELQANGKTCE. One can recognise a CUB 3 domain in the interval 634–753; that stretch reads CGGVVDATKS…SGFVAKFVID (120 aa). N-linked (GlcNAc...) asparagine glycosylation is found at Asn-644 and Asn-677. Intrachain disulfides connect Cys-693/Cys-716, Cys-757/Cys-768, Cys-764/Cys-777, Cys-779/Cys-792, Cys-797/Cys-823, Cys-850/Cys-872, Cys-910/Cys-940, and Cys-967/Cys-989. The EGF-like 2; calcium-binding domain maps to 753 to 793; that stretch reads DVDECSMNNGGCQHRCRNTFGSYQCSCRNGYTLAENGHNCT. A glycan (N-linked (GlcNAc...) asparagine) is linked at Asn-791. CUB domains are found at residues 797–909 and 910–1026; these read CKFE…FVSE and CGGY…FMAV. Residues Asn-864 and Asn-918 are each glycosylated (N-linked (GlcNAc...) asparagine).

Requires Zn(2+) as cofactor.

Metalloprotease which cleaves TGF-beta family ligands daw, Actbeta and myo in vitro. Cleavage of daw enhances its signaling activity. Cleaves dorsal-ventral patterning protein sog. Processes sog more efficiently than metalloprotease tld which also cleaves sog. Required for normal dorsal development. TLD may interact physically with DPP-C protein. The protein is Dorsal-ventral patterning protein tolloid (tld) of Drosophila melanogaster (Fruit fly).